Reading from the N-terminus, the 1294-residue chain is Unconventional myosin-VI (1294 aa).

Residues 2-53 (EDGKPVWAPHPTDGFQMGNIVDIGPDSLTIEPLNQKGKTFLALINQVFPAEE) form the Myosin N-terminal SH3-like domain. The Myosin motor domain maps to 57–771 (KDVEDNCSLM…KFAEFDQIMK (715 aa)). 151-158 (GESGAGKT) contacts ATP. The residue at position 267 (serine 267) is a Phosphoserine. Residues 273 to 317 (YLNRGCTRYFANKETDKQILQNRKSPEYLKAGSMKDPLLDDHGDF) are responsible for slow ATPase activity. Phosphothreonine is present on threonine 405. At serine 604 the chain carries Phosphoserine. Positions 665 to 672 (FIRCIKPN) are actin-binding. Residues 782–810 (KRVNHWLTCSRWKKVQWCSLSVIKLKNKI) form a required for binding calmodulin region. The IQ domain maps to 814-834 (AEACIKMQKTIRMWLCKRRHK). The tract at residues 835-916 (PRIDGLVKVG…EELLSALQKK (82 aa)) is three-helix bundle. Residues 917-984 (KQQEEEAERL…EDDEKRIQAE (68 aa)) are SAH. A disordered region spans residues 934 to 955 (EKERKRREEDEKRRRKEEEERR). Position 1025 is a phosphoserine (serine 1025). The interaction with TAX1BP1 and CALCOCO2/NDP52 stretch occupies residues 1060-1285 (KEMSEFLSRG…ESRQARPTYA (226 aa)). Residues 1116–1118 (RRL) form an interaction with OPTN region. Residue serine 1155 is modified to Phosphoserine. Residues 1157-1285 (QQNPAAQIPA…ESRQARPTYA (129 aa)) form an interaction with TOM1 region.

This sequence belongs to the TRAFAC class myosin-kinesin ATPase superfamily. Myosin family. As to quaternary structure, homodimer; dimerization seems to implicate the unfolding of the three-helix bundle region creating an additional calmodulin binding site, and cargo binding. Able to function as a monomer under specific conditions in vitro. Forms a complex with CFTR and DAB2 in the apical membrane of epithelial cells. Component of the DISP/DOCK7-induced septin displacement complex, at least composed of DOCK7, LRCH3 and MYO6. Binding to calmodulin through a unique insert, not found in other myosins, located in the neck region between the motor domain and the IQ domain appears to contribute to the directionality reversal. This interaction occurs only if the C-terminal lobe of calmodulin is occupied by calcium. Interaction with F-actin/ACTN1 occurs only at the apical brush border domain of the proximal tubule cells. Interacts with DAB2. In vitro, the C-terminal globular tail binds a C-terminal region of DAB2. Interacts with CFTR. Interacts with CABP5. Interacts with TOM1. Interacts with OPTN. Interacts with TAX1BP1 and CALCOCO2/NDP52. Interacts with TOM1L2. Interacts with CLIC5; may work together in a complex which also includes RDX and MYO6 to stabilize linkages between the plasma membrane and subjacent actin cytoskeleton at the base of stereocilia. In terms of processing, phosphorylation in the motor domain, induced by EGF, results in translocation of MYO6 from the cell surface to membrane ruffles and affects F-actin dynamics. Phosphorylated in vitro by p21-activated kinase (PAK). Expressed in most tissues examined including heart, brain, placenta, pancreas, spleen, thymus, prostate, testis, ovary, small intestine and colon. Highest levels in brain, pancreas, testis and small intestine. Also expressed in fetal brain and cochlea. Isoform 1 and isoform 2, containing the small insert, and isoform 4, containing neither insert, are expressed in unpolarized epithelial cells.

It localises to the golgi apparatus. The protein localises to the trans-Golgi network membrane. The protein resides in the nucleus. It is found in the cytoplasm. Its subcellular location is the perinuclear region. It localises to the membrane. The protein localises to the clathrin-coated pit. The protein resides in the cytoplasmic vesicle. It is found in the clathrin-coated vesicle. Its subcellular location is the cell projection. It localises to the filopodium. The protein localises to the ruffle membrane. The protein resides in the microvillus. It is found in the cytosol. Its subcellular location is the autophagosome. It localises to the endosome. The protein localises to the clathrin-coated vesicle membrane. In terms of biological role, myosins are actin-based motor molecules with ATPase activity. Unconventional myosins serve in intracellular movements. Myosin 6 is a reverse-direction motor protein that moves towards the minus-end of actin filaments. Has slow rate of actin-activated ADP release due to weak ATP binding. Functions in a variety of intracellular processes such as vesicular membrane trafficking and cell migration. Required for the structural integrity of the Golgi apparatus via the p53-dependent pro-survival pathway. Appears to be involved in a very early step of clathrin-mediated endocytosis in polarized epithelial cells. Together with TOM1, mediates delivery of endocytic cargo to autophagosomes thereby promoting autophagosome maturation and driving fusion with lysosomes. Links TOM1 with autophagy receptors, such as TAX1BP1; CALCOCO2/NDP52 and OPTN. May act as a regulator of F-actin dynamics. As part of the DISP complex, may regulate the association of septins with actin and thereby regulate the actin cytoskeleton. May play a role in transporting DAB2 from the plasma membrane to specific cellular targets. May play a role in the extension and network organization of neurites. Required for structural integrity of inner ear hair cells. Required for the correct localization of CLIC5 and RDX at the stereocilium base. Modulates RNA polymerase II-dependent transcription. This chain is Unconventional myosin-VI, found in Homo sapiens (Human).